Consider the following 554-residue polypeptide: Phosphomethylpyrimidine synthase (554 aa).

Residues Asn188, Met217, Tyr246, His282, 302 to 304 (SRG), 343 to 346 (DGLR), and Glu382 each bind substrate. His386 contacts Zn(2+). Tyr409 lines the substrate pocket. His450 is a Zn(2+) binding site. [4Fe-4S] cluster-binding residues include Cys530, Cys533, and Cys538.

The protein belongs to the ThiC family. Homodimer. [4Fe-4S] cluster serves as cofactor.

The catalysed reaction is 5-amino-1-(5-phospho-beta-D-ribosyl)imidazole + S-adenosyl-L-methionine = 4-amino-2-methyl-5-(phosphooxymethyl)pyrimidine + CO + 5'-deoxyadenosine + formate + L-methionine + 3 H(+). It participates in cofactor biosynthesis; thiamine diphosphate biosynthesis. Functionally, catalyzes the synthesis of the hydroxymethylpyrimidine phosphate (HMP-P) moiety of thiamine from aminoimidazole ribotide (AIR) in a radical S-adenosyl-L-methionine (SAM)-dependent reaction. The polypeptide is Phosphomethylpyrimidine synthase (Coxiella burnetii (strain CbuK_Q154) (Coxiella burnetii (strain Q154))).